Here is a 370-residue protein sequence, read N- to C-terminus: F-box protein At1g66490 (370 aa).

The F-box domain maps to 1–46; that stretch reads MRTISDLPVALVEEILSRVPLTSLSAVRSTCKTWNALSKTQIFGKT.

The protein is F-box protein At1g66490 of Arabidopsis thaliana (Mouse-ear cress).